Reading from the N-terminus, the 207-residue chain is Putative tributyltin chloride resistance protein (207 aa).

Residues 37 to 122 (NLPIELALMP…YHAIAALNLG (86 aa)) form a slt-type domain region. Residue Glu-49 is part of the active site.

It belongs to the transglycosylase Slt family.

The protein is Putative tributyltin chloride resistance protein (tbtA) of Alteromonas sp. (strain M-1).